A 357-amino-acid polypeptide reads, in one-letter code: 3-dehydroquinate synthase (357 aa).

Residues 69–74, 103–107, 127–128, K140, K149, and 167–170 each bind NAD(+); these read DGEQFK, GVVGD, TT, and CLQT. E182, H245, and H262 together coordinate Zn(2+).

This sequence belongs to the sugar phosphate cyclases superfamily. Dehydroquinate synthase family. Co(2+) is required as a cofactor. It depends on Zn(2+) as a cofactor. The cofactor is NAD(+).

The protein resides in the cytoplasm. The catalysed reaction is 7-phospho-2-dehydro-3-deoxy-D-arabino-heptonate = 3-dehydroquinate + phosphate. It participates in metabolic intermediate biosynthesis; chorismate biosynthesis; chorismate from D-erythrose 4-phosphate and phosphoenolpyruvate: step 2/7. In terms of biological role, catalyzes the conversion of 3-deoxy-D-arabino-heptulosonate 7-phosphate (DAHP) to dehydroquinate (DHQ). The sequence is that of 3-dehydroquinate synthase from Idiomarina loihiensis (strain ATCC BAA-735 / DSM 15497 / L2-TR).